We begin with the raw amino-acid sequence, 733 residues long: Catalase-peroxidase (733 aa).

The interval 1–24 is disordered; it reads MTDDSTCPVTGGADKQVTGRGQSY. A cross-link (tryptophyl-tyrosyl-methioninium (Trp-Tyr) (with M-245)) is located at residues 96-219; that stretch reads WHSAGTYRTL…LAAVQMGLIY (124 aa). Catalysis depends on histidine 97, which acts as the Proton acceptor. Positions 219 to 245 form a cross-link, tryptophyl-tyrosyl-methioninium (Tyr-Met) (with W-96); sequence YVNPEGPNGKPDPVAAAKDIRETFARM. Histidine 260 provides a ligand contact to heme b.

This sequence belongs to the peroxidase family. Peroxidase/catalase subfamily. In terms of assembly, homodimer or homotetramer. Heme b serves as cofactor. Formation of the three residue Trp-Tyr-Met cross-link is important for the catalase, but not the peroxidase activity of the enzyme.

It carries out the reaction H2O2 + AH2 = A + 2 H2O. It catalyses the reaction 2 H2O2 = O2 + 2 H2O. Bifunctional enzyme with both catalase and broad-spectrum peroxidase activity. This chain is Catalase-peroxidase, found in Methanoregula boonei (strain DSM 21154 / JCM 14090 / 6A8).